Reading from the N-terminus, the 154-residue chain is Low molecular weight protein-tyrosine-phosphatase PtpA (154 aa).

Residue Cys-8 is the Nucleophile of the active site. Arg-14 is a catalytic residue. The active-site Proton donor is Asp-120.

It belongs to the low molecular weight phosphotyrosine protein phosphatase family.

It catalyses the reaction O-phospho-L-tyrosyl-[protein] + H2O = L-tyrosyl-[protein] + phosphate. In terms of biological role, dephosphorylates the phosphotyrosine-containing proteins. This is Low molecular weight protein-tyrosine-phosphatase PtpA (ptpA) from Staphylococcus haemolyticus (strain JCSC1435).